The primary structure comprises 261 residues: Putative [LysW]-aminoadipate/[LysW]-glutamate kinase (261 aa).

Substrate is bound by residues 35 to 36 (GG), Arg-62, and Asn-162.

Belongs to the acetylglutamate kinase family. LysZ subfamily.

It is found in the cytoplasm. It catalyses the reaction [amino-group carrier protein]-C-terminal-N-(1,4-dicarboxybutan-1-yl)-L-glutamine + ATP = [amino-group carrier protein]-C-terminal-N-(1-carboxy-5-phosphooxy-5-oxopentan-1-yl)-L-glutamine + ADP. The catalysed reaction is [amino-group carrier protein]-C-terminal-gamma-(L-glutamyl)-L-glutamate + ATP = [amino-group carrier protein]-C-terminal-gamma-(5-phospho-L-glutamyl)-L-glutamate + ADP. Its pathway is amino-acid biosynthesis; L-lysine biosynthesis via AAA pathway; L-lysine from L-alpha-aminoadipate (Thermus route): step 2/5. It participates in amino-acid biosynthesis; L-arginine biosynthesis. In terms of biological role, involved in both the arginine and lysine biosynthetic pathways. Phosphorylates the LysW-bound precursors glutamate (for arginine biosynthesis), respectively alpha-aminoadipate (for lysine biosynthesis). The chain is Putative [LysW]-aminoadipate/[LysW]-glutamate kinase from Pyrobaculum aerophilum (strain ATCC 51768 / DSM 7523 / JCM 9630 / CIP 104966 / NBRC 100827 / IM2).